The sequence spans 373 residues: 3 beta-hydroxysteroid dehydrogenase/Delta 5--&gt;4-isomerase type 1 (373 aa).

Residues 10–15 (GAGGFL), tyrosine 155, and lysine 159 contribute to the NADP(+) site. Lysine 159 serves as the catalytic Proton donor. The chain crosses the membrane as a helical span at residues 288–308 (VALLYWLGFLLELVSFLLRPV).

The protein belongs to the 3-beta-HSD family. High levels in adrenal gland, kidney and male liver. Low levels in female liver.

The protein localises to the endoplasmic reticulum membrane. The protein resides in the mitochondrion membrane. It catalyses the reaction a 3beta-hydroxy-Delta(5)-steroid + NAD(+) = a 3-oxo-Delta(5)-steroid + NADH + H(+). It carries out the reaction pregnenolone + NAD(+) = pregn-5-ene-3,20-dione + NADH + H(+). The enzyme catalyses 3beta-hydroxyandrost-5-en-17-one + NAD(+) = androst-5-ene-3,17-dione + NADH + H(+). The catalysed reaction is androst-5-en-3beta,17beta-diol + NAD(+) = 17beta-hydroxy-androst-5-en-3-one + NADH + H(+). It catalyses the reaction a 3beta-hydroxysteroid + NADP(+) = a 3-oxosteroid + NADPH + H(+). It carries out the reaction 5alpha-androstane-3beta,17beta-diol + NADP(+) = 17beta-hydroxy-5alpha-androstan-3-one + NADPH + H(+). The enzyme catalyses 3beta-hydroxy-5alpha-androstan-17-one + NADP(+) = 5alpha-androstan-3,17-dione + NADPH + H(+). The catalysed reaction is a 3-oxo-Delta(5)-steroid = a 3-oxo-Delta(4)-steroid. It catalyses the reaction pregn-5-ene-3,20-dione = progesterone. It carries out the reaction androst-5-ene-3,17-dione = androst-4-ene-3,17-dione. The enzyme catalyses 17beta-hydroxy-androst-5-en-3-one = testosterone. The catalysed reaction is 5alpha-androstane-3beta,17beta-diol + NAD(+) = 17beta-hydroxy-5alpha-androstan-3-one + NADH + H(+). It participates in steroid hormone biosynthesis. Its pathway is steroid metabolism. A bifunctional enzyme responsible for the oxidation and isomerization of 3beta-hydroxy-Delta(5)-steroid precursors to 3-oxo-Delta(4)-steroids, an essential step in steroid hormone biosynthesis. Specifically catalyzes the conversion of pregnenolone to progesterone, 17alpha-hydroxypregnenolone to 17alpha-hydroxyprogesterone, dehydroepiandrosterone (DHEA) to 4-androstenedione, and androstenediol to testosterone. Additionally, catalyzes the interconversion between 3beta-hydroxy and 3-oxo-5alpha-androstane steroids controlling the bioavalability of the active forms. Specifically converts dihydrotestosterone to its inactive form 5alpha-androstanediol, that does not bind androgen receptor/AR. Also converts androstanedione, a precursor of testosterone and estrone, to epiandrosterone. Expected to use NAD(+) as preferred electron donor for the 3-beta-hydroxy-steroid dehydrogenase activity and NADPH for the 3-ketosteroid reductase activity. The polypeptide is 3 beta-hydroxysteroid dehydrogenase/Delta 5--&gt;4-isomerase type 1 (HSD3B1) (Mesocricetus auratus (Golden hamster)).